The chain runs to 178 residues: Protein GrpE (178 aa).

Positions 1–11 are enriched in basic and acidic residues; it reads MADELSEKSVE. The segment at 1-32 is disordered; it reads MADELSEKSVEGTEEDGESAPAEGTTEGVPVD.

Belongs to the GrpE family. Homodimer.

It localises to the cytoplasm. In terms of biological role, participates actively in the response to hyperosmotic and heat shock by preventing the aggregation of stress-denatured proteins, in association with DnaK and GrpE. It is the nucleotide exchange factor for DnaK and may function as a thermosensor. Unfolded proteins bind initially to DnaJ; upon interaction with the DnaJ-bound protein, DnaK hydrolyzes its bound ATP, resulting in the formation of a stable complex. GrpE releases ADP from DnaK; ATP binding to DnaK triggers the release of the substrate protein, thus completing the reaction cycle. Several rounds of ATP-dependent interactions between DnaJ, DnaK and GrpE are required for fully efficient folding. This Methanothrix thermoacetophila (strain DSM 6194 / JCM 14653 / NBRC 101360 / PT) (Methanosaeta thermophila) protein is Protein GrpE.